The following is a 103-amino-acid chain: Integration host factor subunit beta (103 aa).

Residues 62–81 (RNPKTGESVALPGKHVPHFK) form a disordered region.

It belongs to the bacterial histone-like protein family. Heterodimer of an alpha and a beta chain.

In terms of biological role, this protein is one of the two subunits of integration host factor, a specific DNA-binding protein that functions in genetic recombination as well as in transcriptional and translational control. This is Integration host factor subunit beta from Xanthomonas axonopodis pv. citri (strain 306).